Reading from the N-terminus, the 267-residue chain is L-aspartate dehydrogenase (267 aa).

NAD(+)-binding residues include A124 and N190. H220 is an active-site residue.

The protein belongs to the L-aspartate dehydrogenase family.

The enzyme catalyses L-aspartate + NADP(+) + H2O = oxaloacetate + NH4(+) + NADPH + H(+). It catalyses the reaction L-aspartate + NAD(+) + H2O = oxaloacetate + NH4(+) + NADH + H(+). The protein operates within cofactor biosynthesis; NAD(+) biosynthesis; iminoaspartate from L-aspartate (dehydrogenase route): step 1/1. Its function is as follows. Specifically catalyzes the NAD or NADP-dependent dehydrogenation of L-aspartate to iminoaspartate. In Polaromonas sp. (strain JS666 / ATCC BAA-500), this protein is L-aspartate dehydrogenase.